The sequence spans 450 residues: Tubulin alpha-3C chain (450 aa).

An MREC motif motif is present at residues 1 to 4; sequence MREC. GTP is bound at residue glutamine 11. Position 40 is an N6-acetyllysine (lysine 40). 7 residues coordinate GTP: glutamate 71, serine 140, glycine 144, threonine 145, threonine 179, asparagine 206, and asparagine 228. Glutamate 71 is a binding site for Mg(2+). The active site involves glutamate 254. The residue at position 282 (tyrosine 282) is a 3'-nitrotyrosine. Serine 439 carries the post-translational modification Phosphoserine. The residue at position 450 (tyrosine 450) is a 3'-nitrotyrosine.

The protein belongs to the tubulin family. In terms of assembly, dimer of alpha and beta chains. A typical microtubule is a hollow water-filled tube with an outer diameter of 25 nm and an inner diameter of 15 nM. Alpha-beta heterodimers associate head-to-tail to form protofilaments running lengthwise along the microtubule wall with the beta-tubulin subunit facing the microtubule plus end conferring a structural polarity. Microtubules usually have 13 protofilaments but different protofilament numbers can be found in some organisms and specialized cells. Requires Mg(2+) as cofactor. In terms of processing, some glutamate residues at the C-terminus are polyglutamylated, resulting in polyglutamate chains on the gamma-carboxyl group. Polyglutamylation plays a key role in microtubule severing by spastin (SPAST). SPAST preferentially recognizes and acts on microtubules decorated with short polyglutamate tails: severing activity by SPAST increases as the number of glutamates per tubulin rises from one to eight, but decreases beyond this glutamylation threshold. Glutamylation is also involved in cilia motility. Post-translationally, some glutamate residues at the C-terminus are monoglycylated but not polyglycylated due to the absence of functional TTLL10 in human. Monoglycylation is mainly limited to tubulin incorporated into cilia and flagella axonemes, which is required for their stability and maintenance. Flagella glycylation controls sperm motility. Both polyglutamylation and monoglycylation can coexist on the same protein on adjacent residues, and lowering glycylation levels increases polyglutamylation, and reciprocally. Acetylation of alpha chains at Lys-40 is located inside the microtubule lumen. This modification has been correlated with increased microtubule stability, intracellular transport and ciliary assembly. In terms of processing, methylation of alpha chains at Lys-40 is found in mitotic microtubules and is required for normal mitosis and cytokinesis contributing to genomic stability. Post-translationally, nitration of Tyr-450 is irreversible and interferes with normal dynein intracellular distribution. Undergoes a tyrosination/detyrosination cycle, the cyclic removal and re-addition of a C-terminal tyrosine residue by the enzymes tubulin tyrosine carboxypeptidase (MATCAP1/KIAA0895L, VASH1 or VASH2) and tubulin tyrosine ligase (TTL), respectively. In terms of processing, tyrosination promotes microtubule interaction with CAP-Gly domain-containing proteins such as CLIP1, CLIP2 and DCTN1. Tyrosination regulates the initiation of dynein-dynactin motility via interaction with DCTN1, which brings the dynein-dynactin complex into contact with microtubules. In neurons, tyrosinated tubulins mediate the initiation of retrograde vesicle transport. Post-translationally, detyrosination is involved in metaphase plate congression by guiding chromosomes during mitosis: detyrosination promotes interaction with CENPE, promoting pole-proximal transport of chromosomes toward the equator. Detyrosination increases microtubules-dependent mechanotransduction in dystrophic cardiac and skeletal muscle. In cardiomyocytes, detyrosinated microtubules are required to resist to contractile compression during contraction: detyrosination promotes association with desmin (DES) at force-generating sarcomeres, leading to buckled microtubules and mechanical resistance to contraction. In terms of tissue distribution, expressed in testis.

Its subcellular location is the cytoplasm. It is found in the cytoskeleton. The catalysed reaction is GTP + H2O = GDP + phosphate + H(+). Tubulin is the major constituent of microtubules, a cylinder consisting of laterally associated linear protofilaments composed of alpha- and beta-tubulin heterodimers. Microtubules grow by the addition of GTP-tubulin dimers to the microtubule end, where a stabilizing cap forms. Below the cap, tubulin dimers are in GDP-bound state, owing to GTPase activity of alpha-tubulin. The polypeptide is Tubulin alpha-3C chain (TUBA3C) (Homo sapiens (Human)).